Reading from the N-terminus, the 384-residue chain is S-adenosylmethionine synthase (384 aa).

Residue His15 participates in ATP binding. Mg(2+) is bound at residue Asp17. Glu43 provides a ligand contact to K(+). L-methionine-binding residues include Glu56 and Gln99. The flexible loop stretch occupies residues 99 to 109 (QSPDINQGVDR). Residues 164-166 (DAK), 230-231 (RF), Asp239, 245-246 (RK), Ala262, and Lys266 each bind ATP. Asp239 lines the L-methionine pocket. Lys270 provides a ligand contact to L-methionine.

It belongs to the AdoMet synthase family. As to quaternary structure, homotetramer; dimer of dimers. Mg(2+) is required as a cofactor. Requires K(+) as cofactor.

It localises to the cytoplasm. It catalyses the reaction L-methionine + ATP + H2O = S-adenosyl-L-methionine + phosphate + diphosphate. It functions in the pathway amino-acid biosynthesis; S-adenosyl-L-methionine biosynthesis; S-adenosyl-L-methionine from L-methionine: step 1/1. In terms of biological role, catalyzes the formation of S-adenosylmethionine (AdoMet) from methionine and ATP. The overall synthetic reaction is composed of two sequential steps, AdoMet formation and the subsequent tripolyphosphate hydrolysis which occurs prior to release of AdoMet from the enzyme. This is S-adenosylmethionine synthase from Citrobacter koseri (strain ATCC BAA-895 / CDC 4225-83 / SGSC4696).